The sequence spans 170 residues: Methanogen homoaconitase small subunit (170 aa).

Residues 24 to 27 carry the YLRT motif; sequence YLRT.

The protein belongs to the LeuD family. LeuD type 2 subfamily. As to quaternary structure, heterotetramer of 2 HacA and 2 HacB proteins. Cannot form a complex with LeuC.

The enzyme catalyses (2R)-homocitrate = (2R,3S)-homoisocitrate. The catalysed reaction is (2R)-homocitrate = cis-homoaconitate + H2O. It catalyses the reaction (2R,3S)-homoisocitrate = cis-homoaconitate + H2O. It carries out the reaction cis-(homo)2aconitate + H2O = (2R,3S)-iso(homo)2citrate. The enzyme catalyses cis-(homo)3aconitate + H2O = (2R,3S)-iso(homo)3citrate. The catalysed reaction is (R)-malate = maleate + H2O. It catalyses the reaction cis-aconitate + H2O = D-threo-isocitrate. The protein operates within organic acid metabolism; 2-oxosuberate biosynthesis. Component of a hydro-lyase with broad substrate specificity for cis-unsaturated tricarboxylic acids. Catalyzes both the reversible dehydration of (R)-homocitrate ((R)-2-hydroxybutane-1,2,4-tricarboxylate) to produce cis-homoaconitate ((Z)-but-1-ene-1,2,4-tricarboxylate), and its hydration to homoisocitrate ((1R,2S)-1-hydroxybutane-1,2,4-tricarboxylate). Is also able to hydrate the analogous longer chain substrates cis-homo(2)-aconitate, cis-homo(3)-aconitate, and even the non-physiological cis-homo(4)-aconitate with similar efficiency. These reactions are part of the biosynthesis pathway of coenzyme B. Can also catalyze the hydration of maleate to (R)-malate, and that of cis-aconitate. Cannot catalyze the hydration of citraconate and the dehydration of (S)-homocitrate, citramalate, 2-isopropylmalate, 3-isopropylmalate, citrate or threo-DL-isocitrate. This Methanocaldococcus jannaschii (strain ATCC 43067 / DSM 2661 / JAL-1 / JCM 10045 / NBRC 100440) (Methanococcus jannaschii) protein is Methanogen homoaconitase small subunit (hacB).